A 203-amino-acid polypeptide reads, in one-letter code: Small ribosomal subunit protein uS4c (203 aa).

The region spanning 91–154 is the S4 RNA-binding domain; it reads MRLDNIIFRL…KYESIISKNI (64 aa).

This sequence belongs to the universal ribosomal protein uS4 family. As to quaternary structure, part of the 30S ribosomal subunit. Contacts protein S5. The interaction surface between S4 and S5 is involved in control of translational fidelity.

The protein localises to the plastid. The protein resides in the chloroplast. Its function is as follows. One of the primary rRNA binding proteins, it binds directly to 16S rRNA where it nucleates assembly of the body of the 30S subunit. Functionally, with S5 and S12 plays an important role in translational accuracy. In Lopidium struthiopteris (Moss), this protein is Small ribosomal subunit protein uS4c (rps4).